The following is a 61-amino-acid chain: MFGIGMPEMLIILVIILIIFGAGKLPEIGGAIGKGIKNFKKASNESEEIDENSRPKKIEPK.

Residues 1 to 21 (MFGIGMPEMLIILVIILIIFG) traverse the membrane as a helical segment.

It belongs to the TatA/E family. In terms of assembly, the Tat system comprises two distinct complexes: a TatABC complex, containing multiple copies of TatA, TatB and TatC subunits, and a separate TatA complex, containing only TatA subunits. Substrates initially bind to the TatABC complex, which probably triggers association of the separate TatA complex to form the active translocon.

It localises to the cell inner membrane. Functionally, part of the twin-arginine translocation (Tat) system that transports large folded proteins containing a characteristic twin-arginine motif in their signal peptide across membranes. TatA could form the protein-conducting channel of the Tat system. This Syntrophus aciditrophicus (strain SB) protein is Sec-independent protein translocase protein TatA.